We begin with the raw amino-acid sequence, 611 residues long: MNYLPFVLQRRSTVVASAPAPGSASRIPESPTTTGSNIINIIYSQSTHPNSSPTSGSAEKFSWQQSWPSRTSAAPTHDSGTMSINTTFDLSSPSVTSGHALTEQTQVVKEGWLMKRGEHIKNWRQRYFVLHSDGRLMGYRSKPADSASTPSDFLLNNFTVRGCQIMTVDRPKPFTFIIRGLQWTTVIERTFAVESELERQQWTEAIRNVSSRLIDVGEVAMTPSEQTDMTDVDMATIAEDELSEQFSVQGTTCNSSGVKKVTLENFEFLKVLGKGTFGKVILCREKATAKLYAIKILKKEVIIQKDEVAHTLTESRVLKSTNHPFLISLKYSFQTNDRLCFVMQYVNGGELFWHLSHERIFTEDRTRFYGAEIISALGYLHSQGIIYRDLKLENLLLDKDGHIKVADFGLCKEDITYGRTTKTFCGTPEYLAPEVLDDNDYGQAVDWWGTGVVMYEMICGRLPFYNRDHDVLFTLILVEEVKFPRNITDEAKNLLAGLLAKDPKKRLGGGKDDVKEIQAHPFFASINWTDLVLKKIPPPFKPQVTSDTDTRYFDKEFTGESVELTPPDPTGPLGSIAEEPLFPQFSYQGDMASTLGTSSHISTSTSLASMQ.

Residues 14 to 25 (VVASAPAPGSAS) are compositionally biased toward low complexity. Disordered regions lie at residues 14–33 (VVAS…SPTT) and 45–88 (QSTH…NTTF). A Phosphoserine modification is found at Ser-30. In terms of domain architecture, PH spans 106–211 (QVVKEGWLMK…WTEAIRNVSS (106 aa)). The Protein kinase domain maps to 266–523 (FEFLKVLGKG…VKEIQAHPFF (258 aa)). ATP is bound by residues 272–280 (LGKGTFGKV) and Lys-295. Asp-389 acts as the Proton acceptor in catalysis. An AGC-kinase C-terminal domain is found at 524 to 597 (ASINWTDLVL…QGDMASTLGT (74 aa)). A Phosphoserine modification is found at Ser-586.

It belongs to the protein kinase superfamily. AGC Ser/Thr protein kinase family. RAC subfamily. As to quaternary structure, interacts with trbl. In terms of processing, phosphorylated and activated by Pk61C/PDK1. Phosphorylated on Ser-586 by the TORC2 complex. In terms of tissue distribution, ubiquitously expressed. Present in ovary, where it is concentrated at the basal side of follicle cells.

It localises to the cytoplasm. It is found in the cytosol. The protein resides in the cell membrane. The catalysed reaction is L-seryl-[protein] + ATP = O-phospho-L-seryl-[protein] + ADP + H(+). It carries out the reaction L-threonyl-[protein] + ATP = O-phospho-L-threonyl-[protein] + ADP + H(+). Its function is as follows. Serine/threonine kinase involved in various developmental processes. During early embryogenesis, acts as a survival protein. During mid-embryogenesis, phosphorylates and activates trh, a transcription factor required for tracheal cell fate determination. Also regulates tracheal cell migration. Later in development, acts downstream of PI3K and Pk61C/PDK1 in the insulin receptor transduction pathway which regulates cell growth and organ size, by phosphorylating and antagonizing FOXO transcription factor. Controls follicle cell size during oogenesis. May also stimulate cell growth by phosphorylating Gig/Tsc2 and inactivating the Tsc complex. Dephosphorylation of 'Ser-586' by Phlpp triggers apoptosis and suppression of tumor growth. This chain is RAC serine/threonine-protein kinase, found in Drosophila melanogaster (Fruit fly).